Reading from the N-terminus, the 286-residue chain is Putative sensory transducer protein YfmS (286 aa).

The 219-residue stretch at 68–286 (ITDAIRSNQK…KMAEKALEEE (219 aa)) folds into the Methyl-accepting transducer domain.

It belongs to the methyl-accepting chemotaxis (MCP) protein family.

Functionally, chemotactic-signal transducers respond to changes in the concentration of attractants and repellents in the environment, transduce a signal from the outside to the inside of the cell, and facilitate sensory adaptation through the variation of the level of methylation. Attractants increase the level of methylation while repellents decrease the level of methylation. The chain is Putative sensory transducer protein YfmS (yfmS) from Bacillus subtilis (strain 168).